A 235-amino-acid polypeptide reads, in one-letter code: Large ribosomal subunit protein uL1 (235 aa).

This sequence belongs to the universal ribosomal protein uL1 family. Part of the 50S ribosomal subunit.

Its function is as follows. Binds directly to 23S rRNA. The L1 stalk is quite mobile in the ribosome, and is involved in E site tRNA release. Protein L1 is also a translational repressor protein, it controls the translation of the L11 operon by binding to its mRNA. This is Large ribosomal subunit protein uL1 from Prochlorococcus marinus (strain MIT 9312).